A 335-amino-acid polypeptide reads, in one-letter code: Probable cytosolic iron-sulfur protein assembly protein Ciao1 (335 aa).

WD repeat units lie at residues 12-51 (GHKG…WGTK), 57-96 (GHKR…FECN), 101-140 (GHEN…EFEC), 146-185 (PHTQ…NDWD), 192-231 (SHTS…NTAG), 250-289 (QHSR…KPDE), and 301-335 (AHDQ…KVSE).

Belongs to the WD repeat CIA1 family.

In terms of biological role, essential component of the cytosolic iron-sulfur (Fe/S) protein assembly machinery. Required for the maturation of extramitochondrial Fe/S proteins. This is Probable cytosolic iron-sulfur protein assembly protein Ciao1 from Drosophila sechellia (Fruit fly).